The chain runs to 100 residues: Urease subunit gamma (100 aa).

This sequence belongs to the urease gamma subunit family. As to quaternary structure, heterotrimer of UreA (gamma), UreB (beta) and UreC (alpha) subunits. Three heterotrimers associate to form the active enzyme.

The protein localises to the cytoplasm. It catalyses the reaction urea + 2 H2O + H(+) = hydrogencarbonate + 2 NH4(+). It functions in the pathway nitrogen metabolism; urea degradation; CO(2) and NH(3) from urea (urease route): step 1/1. This chain is Urease subunit gamma, found in Opitutus terrae (strain DSM 11246 / JCM 15787 / PB90-1).